Consider the following 415-residue polypeptide: Phosphoglycerate kinase (415 aa).

Substrate is bound by residues 24 to 26 (DLN), arginine 43, 66 to 69 (HLGR), arginine 125, and arginine 165. Residues lysine 215, glycine 303, glutamate 334, and 363–366 (GGDS) each bind ATP.

This sequence belongs to the phosphoglycerate kinase family. As to quaternary structure, monomer.

It is found in the cytoplasm. It catalyses the reaction (2R)-3-phosphoglycerate + ATP = (2R)-3-phospho-glyceroyl phosphate + ADP. The protein operates within carbohydrate degradation; glycolysis; pyruvate from D-glyceraldehyde 3-phosphate: step 2/5. The sequence is that of Phosphoglycerate kinase from Mycobacterium avium (strain 104).